A 776-amino-acid polypeptide reads, in one-letter code: Bifunctional lysine-specific demethylase and histidyl-hydroxylase NO66 (776 aa).

3 disordered regions span residues 1–57 (MGKK…EPKF), 87–126 (EQNG…AHKH), and 165–288 (ILDE…DDEG). Basic and acidic residues-rich tracts occupy residues 47-57 (HYKEPSKEPKF) and 98-119 (EISP…DGVA). Residues 166 to 204 (LDEEVEDEEIDEEEFEDEEEVEDEEGMDEDETEIDESEM) show a composition bias toward acidic residues. Residues 206 to 216 (VDPKDIERCIE) show a composition bias toward basic and acidic residues. Residues 217–288 (FEDVDDEDEM…EMDADSDDEG (72 aa)) show a composition bias toward acidic residues. The region spanning 425-569 (QLVNPQTFDD…NLMEKVIPEA (145 aa)) is the JmjC domain. His-468, Asp-470, and His-535 together coordinate Fe cation.

It belongs to the ROX family. NO66 subfamily. The cofactor is Fe(2+).

Its subcellular location is the nucleus. The catalysed reaction is N(6),N(6)-dimethyl-L-lysyl(36)-[histone H3] + 2 2-oxoglutarate + 2 O2 = L-lysyl(36)-[histone H3] + 2 formaldehyde + 2 succinate + 2 CO2. Functionally, oxygenase that can act as both a histone lysine demethylase and a ribosomal histidine hydroxylase. Specifically demethylates 'Lys-4' (H3K4me) and 'Lys-36' (H3K36me) of histone H3, thereby playing a central role in histone code. The polypeptide is Bifunctional lysine-specific demethylase and histidyl-hydroxylase NO66 (jmjc-1) (Caenorhabditis briggsae).